Consider the following 209-residue polypeptide: Transmembrane 4 L6 family member 19 (209 aa).

The Cytoplasmic portion of the chain corresponds to 1–16 (MVSSPCTQASSRTCSR). A helical transmembrane segment spans residues 17–37 (ILGLSLGTAALFAAGANVALL). Over 38–59 (LPNWDVTYLLRGLLGRHAMLGT) the chain is Extracellular. The helical transmembrane segment at 60 to 80 (GLWGGGLMVLTAAILISLMGW) threads the bilayer. At 81 to 93 (RYGCFSKSGLCRS) the chain is on the cytoplasmic side. The helical transmembrane segment at 94 to 114 (VLTALLSGGLALLGALICFVT) threads the bilayer. Residues 115–175 (SGVALKDGPF…PSAAVVWHVS (61 aa)) lie on the Extracellular side of the membrane. Asparagine 133 is a glycosylation site (N-linked (GlcNAc...) asparagine). A helical transmembrane segment spans residues 176 to 196 (LFSALLCISLLQLLLVVVHVI). The tract at residues 186–196 (LQLLLVVVHVI) is important for homodimerization. Residues 197–209 (NSLLGLFCSLCEK) lie on the Cytoplasmic side of the membrane.

This sequence belongs to the L6 tetraspanin family. May form homodimers and homooligomers. Interacts with integrins ITGAV and ITGB3. Interacts with components of members of the V0 complex of vacuolar(H+)-ATPase (V-ATPase), including ATP6V0B and ATP6V0D2; this interaction inhibits V1-V0 complex assembly. As to expression, in adipose tissue, expressed by macrophages.

The protein resides in the lysosome membrane. Its subcellular location is the cytoplasm. It localises to the cytoskeleton. It is found in the cell projection. The protein localises to the filopodium. Negatively regulates vacuolar (H+)-ATPase (V-ATPase) activity by interacting with members of V-ATPase V0 complex and hence inhibiting V1-V0 complex assembly. Required for multinucleation during osteoclast differentiation. This is Transmembrane 4 L6 family member 19 (TM4SF19) from Homo sapiens (Human).